We begin with the raw amino-acid sequence, 458 residues long: Histidine--tRNA ligase (458 aa).

The protein belongs to the class-II aminoacyl-tRNA synthetase family. In terms of assembly, homodimer.

The protein resides in the cytoplasm. It catalyses the reaction tRNA(His) + L-histidine + ATP = L-histidyl-tRNA(His) + AMP + diphosphate + H(+). The polypeptide is Histidine--tRNA ligase (Micrococcus luteus (strain ATCC 4698 / DSM 20030 / JCM 1464 / CCM 169 / CCUG 5858 / IAM 1056 / NBRC 3333 / NCIMB 9278 / NCTC 2665 / VKM Ac-2230) (Micrococcus lysodeikticus)).